The following is a 232-amino-acid chain: Ion-translocating oxidoreductase complex subunit E (232 aa).

6 helical membrane-spanning segments follow: residues 18 to 38, 39 to 59, 69 to 89, 93 to 113, 128 to 148, and 182 to 202; these read GLVQ…LTNA, LGLG…VSLV, IPVF…VINA, GLYL…VIIG, AFDG…LGAV, and SFLL…LIAG.

It belongs to the NqrDE/RnfAE family. As to quaternary structure, the complex is composed of six subunits: RnfA, RnfB, RnfC, RnfD, RnfE and RnfG.

The protein resides in the cell inner membrane. Its function is as follows. Part of a membrane-bound complex that couples electron transfer with translocation of ions across the membrane. The chain is Ion-translocating oxidoreductase complex subunit E from Shewanella amazonensis (strain ATCC BAA-1098 / SB2B).